The sequence spans 552 residues: Putative transport protein HS_1470 (552 aa).

Helical transmembrane passes span 4–24 (IAIT…IGHW), 28–48 (GVGL…HFMN), 67–87 (LILF…ASLL), 95–115 (GLAT…YKVV), and 157–177 (MAYA…MWLI). RCK C-terminal domains follow at residues 190 to 275 (KQFQ…VIGE) and 277 to 360 (IDMP…IIGN). 6 helical membrane passes run 370 to 390 (MLPV…PFYI), 402 to 424 (AGGP…LYWF), 438 to 458 (IVLF…DTLV), 463 to 483 (LEWM…TGII), 495 to 515 (LCGL…ANAI), and 529 to 549 (VYPL…ILLW).

Belongs to the AAE transporter (TC 2.A.81) family. YidE subfamily.

The protein resides in the cell membrane. The polypeptide is Putative transport protein HS_1470 (Histophilus somni (strain 129Pt) (Haemophilus somnus)).